The primary structure comprises 178 residues: uncharacterized protein (178 aa).

It belongs to the mimivirus L39/R874 family.

This is an uncharacterized protein from Acanthamoeba polyphaga (Amoeba).